The primary structure comprises 263 residues: Acyl-[acyl-carrier-protein]--UDP-N-acetylglucosamine O-acyltransferase (263 aa).

Belongs to the transferase hexapeptide repeat family. LpxA subfamily. Homotrimer.

The protein resides in the cytoplasm. It catalyses the reaction a (3R)-hydroxyacyl-[ACP] + UDP-N-acetyl-alpha-D-glucosamine = a UDP-3-O-[(3R)-3-hydroxyacyl]-N-acetyl-alpha-D-glucosamine + holo-[ACP]. It participates in glycolipid biosynthesis; lipid IV(A) biosynthesis; lipid IV(A) from (3R)-3-hydroxytetradecanoyl-[acyl-carrier-protein] and UDP-N-acetyl-alpha-D-glucosamine: step 1/6. In terms of biological role, involved in the biosynthesis of lipid A, a phosphorylated glycolipid that anchors the lipopolysaccharide to the outer membrane of the cell. The chain is Acyl-[acyl-carrier-protein]--UDP-N-acetylglucosamine O-acyltransferase from Xanthomonas euvesicatoria pv. vesicatoria (strain 85-10) (Xanthomonas campestris pv. vesicatoria).